Reading from the N-terminus, the 397-residue chain is MGASKIVLAYSGGLDTTVAVKWLSEKFGAEVYTVTVDVGQEDDFSKIEERAYKAGAVQHFYIDAKREFAEEYIARAILMNGMYEGVYPLGTALARPLIAAKVVEVARRLGADAVAHGSTSKGNDQVRFDVTVKALAPDLKIIAPARIWGMTRAEEIEYAKRHGLPVGEEHKKYSIDDNLWSRSIEGGPIDDPLAEPPEDAFKWTVSPDKAPHDPTYLTIEFEKGLPVAVNGEKMSLASIISLLNHVGGANGVGRIDHIENRLVGFKSREVYEAPAAVILYHAHRDLEKMVLTPRELRFKHYVLDPQWADLVYQGLWVEPLRNALEKAAEEMERWVSGEVRVKLYKGSLWVVGRESPYGGYSKELADYSAGWYPSDEEARGFIEMWSLHSLTALRRRK.

9 to 17 (AYSGGLDTT) lines the ATP pocket. Residue Y87 participates in L-citrulline binding. Residue G117 coordinates ATP. Residues T119, N123, and D124 each coordinate L-aspartate. N123 is an L-citrulline binding site. L-citrulline-binding residues include R127, S174, S183, E259, and Y271.

This sequence belongs to the argininosuccinate synthase family. Type 1 subfamily. In terms of assembly, homotetramer.

The protein localises to the cytoplasm. It catalyses the reaction L-citrulline + L-aspartate + ATP = 2-(N(omega)-L-arginino)succinate + AMP + diphosphate + H(+). The protein operates within amino-acid biosynthesis; L-arginine biosynthesis; L-arginine from L-ornithine and carbamoyl phosphate: step 2/3. In Pyrobaculum aerophilum (strain ATCC 51768 / DSM 7523 / JCM 9630 / CIP 104966 / NBRC 100827 / IM2), this protein is Argininosuccinate synthase.